The chain runs to 343 residues: Glycerol-3-phosphate dehydrogenase [NAD(P)+] (343 aa).

4 residues coordinate NADPH: serine 11, tryptophan 12, arginine 32, and lysine 106. Positions 106, 137, and 139 each coordinate sn-glycerol 3-phosphate. Alanine 141 provides a ligand contact to NADPH. The sn-glycerol 3-phosphate site is built by lysine 192, aspartate 245, serine 255, arginine 256, and asparagine 257. Lysine 192 (proton acceptor) is an active-site residue. NADPH is bound at residue arginine 256. Positions 280 and 282 each coordinate NADPH.

It belongs to the NAD-dependent glycerol-3-phosphate dehydrogenase family.

The protein localises to the cytoplasm. The catalysed reaction is sn-glycerol 3-phosphate + NAD(+) = dihydroxyacetone phosphate + NADH + H(+). It carries out the reaction sn-glycerol 3-phosphate + NADP(+) = dihydroxyacetone phosphate + NADPH + H(+). The protein operates within membrane lipid metabolism; glycerophospholipid metabolism. Catalyzes the reduction of the glycolytic intermediate dihydroxyacetone phosphate (DHAP) to sn-glycerol 3-phosphate (G3P), the key precursor for phospholipid synthesis. This is Glycerol-3-phosphate dehydrogenase [NAD(P)+] from Syntrophomonas wolfei subsp. wolfei (strain DSM 2245B / Goettingen).